The chain runs to 272 residues: Ras-related protein RSR1 (272 aa).

G10–S17 provides a ligand contact to GTP. Positions Y32 to Y40 match the Effector region motif. Residues D57–I61 and N116–D119 contribute to the GTP site. Positions D177–L272 are disordered. 2 stretches are compositionally biased toward polar residues: residues N180–V232 and S245–Q258. C269 carries the cysteine methyl ester modification. The S-geranylgeranyl cysteine moiety is linked to residue C269. The propeptide at T270 to L272 is removed in mature form.

Belongs to the small GTPase superfamily. Ras family.

It is found in the cell membrane. The catalysed reaction is GTP + H2O = GDP + phosphate + H(+). With respect to regulation, alternates between an inactive form bound to GDP and an active form bound to GTP. Activated by a guanine nucleotide-exchange factor (GEF) and inactivated by a GTPase-activating protein (GAP). Functionally, ras-related protein which binds GDP/GTP and possesses intrinsic GTPase activity. Involved in development of cell polarity during the cell division cycle, and essential for bud emergence. This chain is Ras-related protein RSR1, found in Saccharomyces cerevisiae (strain ATCC 204508 / S288c) (Baker's yeast).